The primary structure comprises 176 residues: Zinc finger protein 428 (176 aa).

The disordered stretch occupies residues 1–152; sequence MTETREPTET…EEEGGTYHCT (152 aa). Positions 16 to 46 are enriched in acidic residues; sequence LEEDDEDLSPEPDSEEEEEEEEEETTDDPEY. Thr-96 carries the post-translational modification Phosphothreonine. A compositionally biased stretch (basic and acidic residues) spans 126–138; sequence PSRTGETRPAGRD. A C2H2-type zinc finger spans residues 149-171; the sequence is YHCTECEDSFDNLGELHGHFMLH.

The protein is Zinc finger protein 428 (Znf428) of Mus musculus (Mouse).